Consider the following 256-residue polypeptide: tRNA-cytidine(32) 2-sulfurtransferase (256 aa).

The PP-loop motif signature appears at S35–S40. Residues C110, C113, and C201 each coordinate [4Fe-4S] cluster.

Belongs to the TtcA family. As to quaternary structure, homodimer. Requires Mg(2+) as cofactor. [4Fe-4S] cluster serves as cofactor.

The protein resides in the cytoplasm. It carries out the reaction cytidine(32) in tRNA + S-sulfanyl-L-cysteinyl-[cysteine desulfurase] + AH2 + ATP = 2-thiocytidine(32) in tRNA + L-cysteinyl-[cysteine desulfurase] + A + AMP + diphosphate + H(+). It functions in the pathway tRNA modification. Functionally, catalyzes the ATP-dependent 2-thiolation of cytidine in position 32 of tRNA, to form 2-thiocytidine (s(2)C32). The sulfur atoms are provided by the cysteine/cysteine desulfurase (IscS) system. The sequence is that of tRNA-cytidine(32) 2-sulfurtransferase from Coxiella burnetii (strain CbuG_Q212) (Coxiella burnetii (strain Q212)).